The primary structure comprises 878 residues: MKKLIYYFGSNGSDGNASMKNILGNKGAGLAEMSNLKLPIPDGFTITTELCNYFYTHNNNFPKNFQSDLKKAITELEIITGKIFGSTSNPLLLSVRSGSKVSMPGMMDTILNLGMNNEVCNALADSCGDKRFALDSYKRFLEMYGSTVLSIPSDLFEQICEKHKMQADIHKDSDITVELLEKIIDDFKRLHIKYTKQLINDPYEQLESAIKAVLHSWMSNRAVIYRKINNISEDCGTAINIQAMVFGNLGKTSATGVAFTRSPSTGEKKLFGEFLINAQGEDIVSGTRTPMPIIANDSNSMQAMMPEVFKELSQIAQKLEEHYLDMQDIEFTIENNKLYILQTRTAKRTAIAAINIAVQMVEEKLISKEQALMRIDPESLNQLLHTRIDYSKGLTSIAEGLPASPGAATGIAVFSPYDAEKLSHHHKVILVRHDTSPEDINGMHVSSGIVTIRGGMTSHAAVVARGMGKPCVCGTSNLSIDEKKQILTAGDIVIKQGDIITIDGGSGKIFLGEMPLIQPTFSEESKLILDWADEISSLKVRANAETVNDALVSVKFGAQGIGLCRSEHMFFDKNKIPLVRDMIIAPDIERRKLAVQKLLPLQTEDFKALFRVMKDKPVNIRLLDPPLHEFLPTTEEDKKNLANSLNLPLSMINQRLHAMHEVNPMLGHRGCRLGICSPEIYQMQIEAIFTAIFELHKKEHIECNLELMIPLISNVGEIQKLKMDIYAVIEKLEQRYRYKFSFTLGTMIELPRAALGSKKIAKEVDYFSFGTNDLTQTTYGISRDDIASFLPYYLEEKIFESDPFTTLDEEGVGELIDIAIKRGKSSNANLKLGACGEHAGNPASIEFFHRMNLNYVSCSPYRIPIARIAAAQAKIKHG.

An N-terminal region spans residues 1–347; the sequence is MKKLIYYFGS…LYILQTRTAK (347 aa). Residue Arg-96 participates in ATP binding. The tract at residues 348–404 is linker 1; it reads RTAIAAINIAVQMVEEKLISKEQALMRIDPESLNQLLHTRIDYSKGLTSIAEGLPAS. The central stretch occupies residues 405–502; the sequence is PGAATGIAVF…VIKQGDIITI (98 aa). Thr-457 carries the phosphothreonine; by PDRP1 modification. The Tele-phosphohistidine intermediate role is filled by His-459. The linker 2 stretch occupies residues 503–537; the sequence is DGGSGKIFLGEMPLIQPTFSEESKLILDWADEISS. Residues 538–878 form a C-terminal region; the sequence is LKVRANAETV…AAAQAKIKHG (341 aa). The substrate site is built by Arg-565, Arg-621, Glu-749, Gly-770, Thr-771, Asn-772, and Asp-773. Glu-749 contacts Mg(2+). Position 773 (Asp-773) interacts with Mg(2+). The Proton donor role is filled by Cys-835.

This sequence belongs to the PEP-utilizing enzyme family. In terms of assembly, homodimer. The cofactor is Mg(2+). Post-translationally, phosphorylation of Thr-457 in the dark inactivates the enzyme. Dephosphorylation upon light stimulation reactivates the enzyme.

The enzyme catalyses pyruvate + phosphate + ATP = phosphoenolpyruvate + AMP + diphosphate + H(+). With respect to regulation, activated by light-induced dephosphorylation. Inhibited by dark-induced phosphorylation. Both reactions are catalyzed by PDRP1. In terms of biological role, catalyzes the reversible phosphorylation of pyruvate and phosphate. In Rickettsia conorii (strain ATCC VR-613 / Malish 7), this protein is Pyruvate, phosphate dikinase (ppdK).